The sequence spans 171 residues: Envelope glycoprotein N (171 aa).

Residues 1–132 are Virion surface-facing; it reads MARINSNSGT…CSALKYRIYV (132 aa). Residues 133–153 form a helical membrane-spanning segment; it reads SSFVSVLNIILYVLLFLASVV. At 154–171 the chain is on the intravirion side; that stretch reads YIRYLCHQSITTETVKDY.

It belongs to the herpesviridae glycoprotein N family. Interacts (via N-terminus) with gM (via N-terminus). The gM-gN heterodimer forms the gCII complex.

The protein localises to the virion membrane. The protein resides in the host membrane. It is found in the host Golgi apparatus. Its subcellular location is the host trans-Golgi network. Its function is as follows. Envelope glycoprotein necessary for proper maturation of gM and modulation of its membrane fusion activity. Also plays a critical role in virion morphogenesis. This chain is Envelope glycoprotein N, found in Elephas maximus (Indian elephant).